A 403-amino-acid chain; its full sequence is Dual-specificity RNA methyltransferase RlmN (403 aa).

Residue E126 is the Proton acceptor of the active site. Residues 132–375 form the Radical SAM core domain; it reads ETDRGTLCVS…VRTPRGRDIL (244 aa). Residues C139 and C378 are joined by a disulfide bond. Residues C146, C150, and C153 each coordinate [4Fe-4S] cluster. S-adenosyl-L-methionine-binding positions include 204–205, S236, 258–260, and N335; these read GE and SLH. C378 serves as the catalytic S-methylcysteine intermediate.

It belongs to the radical SAM superfamily. RlmN family. [4Fe-4S] cluster serves as cofactor.

The protein localises to the cytoplasm. It carries out the reaction adenosine(2503) in 23S rRNA + 2 reduced [2Fe-2S]-[ferredoxin] + 2 S-adenosyl-L-methionine = 2-methyladenosine(2503) in 23S rRNA + 5'-deoxyadenosine + L-methionine + 2 oxidized [2Fe-2S]-[ferredoxin] + S-adenosyl-L-homocysteine. The enzyme catalyses adenosine(37) in tRNA + 2 reduced [2Fe-2S]-[ferredoxin] + 2 S-adenosyl-L-methionine = 2-methyladenosine(37) in tRNA + 5'-deoxyadenosine + L-methionine + 2 oxidized [2Fe-2S]-[ferredoxin] + S-adenosyl-L-homocysteine. Its function is as follows. Specifically methylates position 2 of adenine 2503 in 23S rRNA and position 2 of adenine 37 in tRNAs. m2A2503 modification seems to play a crucial role in the proofreading step occurring at the peptidyl transferase center and thus would serve to optimize ribosomal fidelity. In Bradyrhizobium sp. (strain BTAi1 / ATCC BAA-1182), this protein is Dual-specificity RNA methyltransferase RlmN.